The primary structure comprises 370 residues: Galanin receptor type 3 (370 aa).

Topologically, residues Met1 to Val20 are extracellular. Residue Asn6 is glycosylated (N-linked (GlcNAc...) asparagine). The chain crosses the membrane as a helical span at residues Pro21 to Val41. At Leu42–Thr57 the chain is on the cytoplasmic side. Residues Asp58–Phe78 traverse the membrane as a helical segment. At Gln79–Lys96 the chain is on the extracellular side. Cys95 and Cys172 are joined by a disulfide. The chain crosses the membrane as a helical span at residues Thr97 to Val118. The Cytoplasmic segment spans residues Asp119 to Asn138. Residues Ala139–Ser159 form a helical membrane-spanning segment. Over Tyr160–Leu184 the chain is Extracellular. Residues Asp185–Gly205 form a helical membrane-spanning segment. Topologically, residues Arg206 to Ala236 are cytoplasmic. The chain crosses the membrane as a helical span at residues Met237–Cys257. The Extracellular portion of the chain corresponds to Phe258–Trp259. A helical membrane pass occupies residues Tyr260–Ala280. At Tyr281 to Gln370 the chain is on the cytoplasmic side. A lipid anchor (S-palmitoyl cysteine) is attached at Cys308. A disordered region spans residues Gln328–Gln370. Positions Pro350–Glu359 are enriched in basic and acidic residues.

This sequence belongs to the G-protein coupled receptor 1 family.

The protein resides in the cell membrane. Functionally, receptor for the hormone galanin and spexin-1. In Mus musculus (Mouse), this protein is Galanin receptor type 3 (Galr3).